The chain runs to 358 residues: Vascular endothelial growth factor D (358 aa).

An N-terminal signal peptide occupies residues 1-21; it reads MYGEWGMGNILMMFHVYLVQG. Residues 22 to 93 constitute a propeptide that is removed on maturation; sequence FRSEHGPVKD…SRSASHRSTR (72 aa). 3 cysteine pairs are disulfide-bonded: Cys116/Cys158, Cys147/Cys194, and Cys151/Cys196. N-linked (GlcNAc...) asparagine glycosylation is found at Asn160 and Asn190. The propeptide occupies 211–358; it reads SIQTPEEDEC…AQGLYSQENP (148 aa). The stretch at 227 to 242 is one 1; approximate repeat; sequence CPIDMLWDNTKCKCVL. The tract at residues 227 to 323 is 4 X 16 AA repeats of C-X(10)-C-X-C-X(1,3)-C; it reads CPIDMLWDNT…PDTCSCEDRC (97 aa). Tandem repeats lie at residues 263–278, 282–298, and 306–323. Asn292 carries an N-linked (GlcNAc...) asparagine glycan.

Belongs to the PDGF/VEGF growth factor family. In terms of assembly, homodimer; non-covalent and antiparallel. Undergoes a complex proteolytic maturation which generates a variety of processed secreted forms with increased activity toward VEGFR-3 and VEGFR-2. VEGF-D first form an antiparallel homodimer linked by disulfide bonds before secretion. The fully processed VEGF-D is composed mostly of two VEGF homology domains (VHDs) bound by non-covalent interactions. In terms of tissue distribution, highly expressed in fetal and adult lung.

The protein localises to the secreted. Functionally, growth factor active in angiogenesis, lymphangiogenesis and endothelial cell growth, stimulating their proliferation and migration and also has effects on the permeability of blood vessels. May function in the formation of the venous and lymphatic vascular systems during embryogenesis, and also in the maintenance of differentiated lymphatic endothelium in adults. Binds and activates VEGFR-3 (Flt4) receptor. The protein is Vascular endothelial growth factor D of Mus musculus (Mouse).